A 332-amino-acid chain; its full sequence is Arabinogalactan endo-beta-1,4-galactanase (332 aa).

A glycan (N-linked (GlcNAc...) asparagine) is linked at Asn-111. Glu-135 (proton donor) is an active-site residue. The active-site Nucleophile is Glu-245.

Belongs to the glycosyl hydrolase 53 family.

The catalysed reaction is The enzyme specifically hydrolyzes (1-&gt;4)-beta-D-galactosidic linkages in type I arabinogalactans.. The polypeptide is Arabinogalactan endo-beta-1,4-galactanase (Thermothelomyces thermophilus (Myceliophthora thermophila)).